The following is a 415-amino-acid chain: Phosphoribosylamine--glycine ligase (415 aa).

The ATP-grasp domain maps to 108-311 (KKIMEKYNIP…LMQHIIDLDE (204 aa)). 134 to 191 (IENCELPVVVKKDGLAAGKGVIIADTIEAARSAIEIMYGDEEEGTVVFETFLEGEEFS) contributes to the ATP binding site. Mg(2+) contacts are provided by Glu-281 and Asn-283.

Belongs to the GARS family. It depends on Mg(2+) as a cofactor. Requires Mn(2+) as cofactor.

The catalysed reaction is 5-phospho-beta-D-ribosylamine + glycine + ATP = N(1)-(5-phospho-beta-D-ribosyl)glycinamide + ADP + phosphate + H(+). Its pathway is purine metabolism; IMP biosynthesis via de novo pathway; N(1)-(5-phospho-D-ribosyl)glycinamide from 5-phospho-alpha-D-ribose 1-diphosphate: step 2/2. The chain is Phosphoribosylamine--glycine ligase from Staphylococcus aureus (strain COL).